The sequence spans 1064 residues: Bifunctional cytochrome P450/NADPH--P450 reductase ascE (1064 aa).

The interval 1 to 484 is cytochrome P450; the sequence is MTELIPGPKG…LHGGAKKGSK (484 aa). Cys-411 is a binding site for heme. Residues 485–1064 are NADPH-P-450 reductase; it reads IDGPSSGASL…ANRYVTEIFA (580 aa). The region spanning 504 to 644 is the Flavodoxin-like domain; that stretch reads MTILYGSDSG…DFERWQDDQL (141 aa). Residues 510–514 and 588–620 each bind FMN; these read SDSGT and VYGC…KRIA. Residues 676–905 enclose the FAD-binding FR-type domain; it reads VDADEATVQS…KPALRLFHPP (230 aa).

The protein in the N-terminal section; belongs to the cytochrome P450 family. Requires FAD as cofactor. FMN is required as a cofactor. The cofactor is heme.

The enzyme catalyses ilicicolin A + NADPH + O2 + H(+) = ilicicolin A epoxide + NADP(+) + H2O. The protein operates within secondary metabolite biosynthesis; terpenoid biosynthesis. In terms of biological role, bifunctional cytochrome P450/NADPH--P450 reductase; part of the asc-1 gene cluster that mediates the biosynthesis both ascochlorin and ascofuranone, a strong inhibitor of cyanide-insensitive alternative oxidases and a promising drug candidate against African trypanosomiasis. The first step in the pathway is performed by the non-reducing polyketide synthase ascC that produces orsellinic acid by condensing acetyl-CoA with 3 malonyl-CoA units. Orsellinic acid is then prenylated by the prenyltransferase ascA to yield ilicicolinic acid B. Ilicicolinic acid B is further reduced to ilicicolin B by the reductase ascB. The halogenase ascD then chlorinates ilicicolin B to produce ilicicolin A which is converted to ilicicolin A epoxide by the cytochrome P450 monooxygenase ascE that catalyzes stereoselective epoxidation of the terminal double bond of the prenyl group. Ilicicolin A epoxide is the last common precursor for the biosynthesis of ascofuranone and ascochlorin. The terpene cyclase ascF produces a monocyclic terpene, and the cyclization reaction is proposed to be initiated by protonation of the terminal epoxide of ilicicolin A epoxide to generate a monocyclic tertiarycation, which is followed by a series of hydride and methyl shifts with abstraction of proton, leading to the formation of the (14S,15R,19R)-trimethylcyclohexanone ring structure of ilicicolin C, which is finally reduced to ascochlorin by the dehydrogenase ascG. On the other hand, ilicicolin A epoxide is hydroxylated by the cytochrome P450 monooxygenase ascH, and the resultant product is cyclized by the terpene cyclase ascI to ascofuranol via protonation-initiated epoxide ring opening, which facilitates the 6-endo-tet cyclization to form the tetrahy-drofuran ring. Finally, ascofuranol is oxidized into ascofuranone by ascJ. The sequence is that of Bifunctional cytochrome P450/NADPH--P450 reductase ascE from Acremonium egyptiacum (Oospora egyptiaca).